We begin with the raw amino-acid sequence, 699 residues long: UvrABC system protein C (699 aa).

Residues 1 to 51 (MIQHPTDTPEVAADAAAEPERAAGAAGATPQPSQDAVEPAADVDAATASLA) are compositionally biased toward low complexity. The interval 1-59 (MIQHPTDTPEVAADAAAEPERAAGAAGATPQPSQDAVEPAADVDAATASLAAEDDDEPV) is disordered. The region spanning 92 to 170 (TSPGVYRMLN…IKQLRPRFNV (79 aa)) is the GIY-YIG domain. The UVR domain maps to 280-315 (RLVKQELAGEMEKASAELEFETAALYRDRLAALSAI).

The protein belongs to the UvrC family. As to quaternary structure, interacts with UvrB in an incision complex.

Its subcellular location is the cytoplasm. Functionally, the UvrABC repair system catalyzes the recognition and processing of DNA lesions. UvrC both incises the 5' and 3' sides of the lesion. The N-terminal half is responsible for the 3' incision and the C-terminal half is responsible for the 5' incision. The polypeptide is UvrABC system protein C (Rhodopseudomonas palustris (strain BisB18)).